The chain runs to 33 residues: Neurotoxin Nk-3FTx (33 aa).

Cystine bridges form between C3–C24 and C6–C11.

In terms of tissue distribution, expressed by the venom gland.

It is found in the secreted. Its function is as follows. Possible voltage-gated potassium channel (Kv) blocker. Decreases amplitude of compound action potential and conduction velocity in toad sciatic nerve. Has only mild anticoagulant activity even at a concentration of 5ug/ml. Shows no cytotoxicity towards human cell lines. The protein is Neurotoxin Nk-3FTx of Naja kaouthia (Monocled cobra).